The chain runs to 357 residues: MTMPVLIMAGGTGGHVFPALAVAERLREQGVPVVWLGTREGLEARVVPAADIPLESLRVRGLRGNGLRGWLAAPFVLLRALWQALGVLRRHRPRAVLGMGGYAAGPGAVAAWLTRRPLIIHEQNAVAGLTNRLLSRLARRVLTGFPGILPERGGEHVGNPVRDAITRVPGPADRGAGAHEPLRLLVVGGSLGALALNSTVPAALARLPEVQRPVVRHQAGERTLQQAREAYDQAGIAVDLQPFIEDMAAAWTWADLAICRAGALTVAELEAVGVPAILVPLPGAVDDHQTANARQFVAAGAGVLLPQSELSAQRLALELKTLLADPPRLQRMAQCARGLGRPDAAATVARICLEEAR.

Residues 12-14, asparagine 124, arginine 162, serine 190, isoleucine 244, 263-268, and glutamine 289 contribute to the UDP-N-acetyl-alpha-D-glucosamine site; these read TGG and ALTVAE.

The protein belongs to the glycosyltransferase 28 family. MurG subfamily.

It is found in the cell inner membrane. The catalysed reaction is di-trans,octa-cis-undecaprenyl diphospho-N-acetyl-alpha-D-muramoyl-L-alanyl-D-glutamyl-meso-2,6-diaminopimeloyl-D-alanyl-D-alanine + UDP-N-acetyl-alpha-D-glucosamine = di-trans,octa-cis-undecaprenyl diphospho-[N-acetyl-alpha-D-glucosaminyl-(1-&gt;4)]-N-acetyl-alpha-D-muramoyl-L-alanyl-D-glutamyl-meso-2,6-diaminopimeloyl-D-alanyl-D-alanine + UDP + H(+). The protein operates within cell wall biogenesis; peptidoglycan biosynthesis. Cell wall formation. Catalyzes the transfer of a GlcNAc subunit on undecaprenyl-pyrophosphoryl-MurNAc-pentapeptide (lipid intermediate I) to form undecaprenyl-pyrophosphoryl-MurNAc-(pentapeptide)GlcNAc (lipid intermediate II). This chain is UDP-N-acetylglucosamine--N-acetylmuramyl-(pentapeptide) pyrophosphoryl-undecaprenol N-acetylglucosamine transferase, found in Alkalilimnicola ehrlichii (strain ATCC BAA-1101 / DSM 17681 / MLHE-1).